Here is a 366-residue protein sequence, read N- to C-terminus: Ribosome-binding ATPase YchF (366 aa).

One can recognise an OBG-type G domain in the interval 3–259 (LTAGIVGLPN…LEGEEKQMFL (257 aa)). Position 12-17 (12-17 (NVGKST)) interacts with ATP. The Mg(2+) site is built by serine 16 and threonine 36. Residues 281–364 (GLATYFTAGE…QDGDVIHFRF (84 aa)) enclose the TGS domain.

It belongs to the TRAFAC class OBG-HflX-like GTPase superfamily. OBG GTPase family. YchF/OLA1 subfamily. The cofactor is Mg(2+).

ATPase that binds to both the 70S ribosome and the 50S ribosomal subunit in a nucleotide-independent manner. The protein is Ribosome-binding ATPase YchF of Bacillus subtilis (strain 168).